Here is a 330-residue protein sequence, read N- to C-terminus: Aspartate--ammonia ligase (330 aa).

It belongs to the class-II aminoacyl-tRNA synthetase family. AsnA subfamily.

The protein resides in the cytoplasm. The catalysed reaction is L-aspartate + NH4(+) + ATP = L-asparagine + AMP + diphosphate + H(+). It participates in amino-acid biosynthesis; L-asparagine biosynthesis; L-asparagine from L-aspartate (ammonia route): step 1/1. This is Aspartate--ammonia ligase from Shigella sonnei (strain Ss046).